Consider the following 222-residue polypeptide: uncharacterized protein (222 aa).

This sequence belongs to the PhoU family.

It localises to the cytoplasm. Its function is as follows. Not known; probably involved in phosphate transport and/or metabolism. This is an uncharacterized protein from Deinococcus radiodurans (strain ATCC 13939 / DSM 20539 / JCM 16871 / CCUG 27074 / LMG 4051 / NBRC 15346 / NCIMB 9279 / VKM B-1422 / R1).